The primary structure comprises 159 residues: MEIDFMRILATIINFIILILILKHFFWDKIKRAIDARQEAIDETILKADEDAEKARRLRLDNERILKSAKEEGRKLREEQKKEADRIYKEIVDDAHREAEAIINRANIEIQREEEKVKYELKQQVVDISVMLSEKALGESIDESKHRELINDFIEKVGI.

Residues 8–28 (ILATIINFIILILILKHFFWD) traverse the membrane as a helical segment.

Belongs to the ATPase B chain family. As to quaternary structure, F-type ATPases have 2 components, F(1) - the catalytic core - and F(0) - the membrane proton channel. F(1) has five subunits: alpha(3), beta(3), gamma(1), delta(1), epsilon(1). F(0) has three main subunits: a(1), b(2) and c(10-14). The alpha and beta chains form an alternating ring which encloses part of the gamma chain. F(1) is attached to F(0) by a central stalk formed by the gamma and epsilon chains, while a peripheral stalk is formed by the delta and b chains.

It localises to the cell membrane. F(1)F(0) ATP synthase produces ATP from ADP in the presence of a proton or sodium gradient. F-type ATPases consist of two structural domains, F(1) containing the extramembraneous catalytic core and F(0) containing the membrane proton channel, linked together by a central stalk and a peripheral stalk. During catalysis, ATP synthesis in the catalytic domain of F(1) is coupled via a rotary mechanism of the central stalk subunits to proton translocation. In terms of biological role, component of the F(0) channel, it forms part of the peripheral stalk, linking F(1) to F(0). The protein is ATP synthase subunit b of Clostridium perfringens (strain ATCC 13124 / DSM 756 / JCM 1290 / NCIMB 6125 / NCTC 8237 / Type A).